We begin with the raw amino-acid sequence, 907 residues long: Catenin alpha-1 (907 aa).

An N-acetylthreonine modification is found at Thr-2. The segment at 2 to 228 is involved in homodimerization; sequence TAVHAGNINF…PILYTASQAC (227 aa). Lys-57 is covalently cross-linked (Glycyl lysine isopeptide (Lys-Gly) (interchain with G-Cter in SUMO2)). Residues 97–148 are interaction with JUP and CTNNB1; it reads VRKQGDLMKSAAGEFADDPCSSVKRGNMVRAARALLSAVTRLLILADMADVY. Ser-264, Ser-268, Ser-296, and Ser-298 each carry phosphoserine. Residues 326–395 form an interaction with alpha-actinin region; the sequence is TRDDRRERIV…AVMDHVSDSF (70 aa). At Thr-635 the chain carries Phosphothreonine. Ser-642 is subject to Phosphoserine. A Phosphothreonine modification is found at Thr-646. Phosphoserine is present on residues Ser-653 and Ser-656. At Thr-659 the chain carries Phosphothreonine. Residue Lys-798 forms a Glycyl lysine isopeptide (Lys-Gly) (interchain with G-Cter in SUMO2) linkage. The residue at position 852 (Ser-852) is a Phosphoserine. A compositionally biased stretch (basic and acidic residues) spans 865 to 881; it reads PEKKPLVKREKQDETQT. Residues 865–895 are disordered; sequence PEKKPLVKREKQDETQTKIKRASQKKHVNPV. The span at 882–892 shows a compositional bias: basic residues; that stretch reads KIKRASQKKHV.

This sequence belongs to the vinculin/alpha-catenin family. As to quaternary structure, monomer and homodimer; the monomer preferentially binds to CTNNB1 and the homodimer to actin. Component of an cadherin:catenin adhesion complex composed of at least of CDH26, beta-catenin/CTNNB1, alpha-catenin/CTNNA1 and p120 catenin/CTNND1. Possible component of an E-cadherin/ catenin adhesion complex together with E-cadherin/CDH1 and beta-catenin/CTNNB1 or gamma-catenin/JUP; the complex is located to adherens junctions. The stable association of CTNNA1 is controversial as CTNNA1 was shown not to bind to F-actin when assembled in the complex. Alternatively, the CTNNA1-containing complex may be linked to F-actin by other proteins such as LIMA1. Binds AFDN and F-actin. Interacts with ARHGAP21. Interacts with AJUBA. Interacts with LIMA1. Interacts with vinculin/VCL. Interacts with TJP2/ZO2 (via N-terminus). Interacts with TJP1/ZO1 (via N-terminus). Sumoylated. In terms of processing, phosphorylation seems to contribute to the strength of cell-cell adhesion rather than to the basic capacity for cell-cell adhesion.

The protein resides in the cytoplasm. Its subcellular location is the cytoskeleton. The protein localises to the cell junction. It is found in the adherens junction. It localises to the cell membrane. The protein resides in the nucleus. Functionally, associates with the cytoplasmic domain of a variety of cadherins. The association of catenins to cadherins produces a complex which is linked to the actin filament network, and which seems to be of primary importance for cadherins cell-adhesion properties. Can associate with both E- and N-cadherins. Originally believed to be a stable component of E-cadherin/catenin adhesion complexes and to mediate the linkage of cadherins to the actin cytoskeleton at adherens junctions. In contrast, cortical actin was found to be much more dynamic than E-cadherin/catenin complexes and CTNNA1 was shown not to bind to F-actin when assembled in the complex suggesting a different linkage between actin and adherens junctions components. The homodimeric form may regulate actin filament assembly and inhibit actin branching by competing with the Arp2/3 complex for binding to actin filaments. Involved in the regulation of WWTR1/TAZ, YAP1 and TGFB1-dependent SMAD2 and SMAD3 nuclear accumulation. May play a crucial role in cell differentiation. The protein is Catenin alpha-1 of Oryctolagus cuniculus (Rabbit).